A 368-amino-acid polypeptide reads, in one-letter code: Cobalt-precorrin-5B C(1)-methyltransferase (368 aa).

It belongs to the CbiD family.

It catalyses the reaction Co-precorrin-5B + S-adenosyl-L-methionine = Co-precorrin-6A + S-adenosyl-L-homocysteine. Its pathway is cofactor biosynthesis; adenosylcobalamin biosynthesis; cob(II)yrinate a,c-diamide from sirohydrochlorin (anaerobic route): step 6/10. In terms of biological role, catalyzes the methylation of C-1 in cobalt-precorrin-5B to form cobalt-precorrin-6A. The sequence is that of Cobalt-precorrin-5B C(1)-methyltransferase from Brucella anthropi (strain ATCC 49188 / DSM 6882 / CCUG 24695 / JCM 21032 / LMG 3331 / NBRC 15819 / NCTC 12168 / Alc 37) (Ochrobactrum anthropi).